A 140-amino-acid polypeptide reads, in one-letter code: Large ribosomal subunit protein uL11 (140 aa).

The protein belongs to the universal ribosomal protein uL11 family. As to quaternary structure, part of the ribosomal stalk of the 50S ribosomal subunit. Interacts with L10 and the large rRNA to form the base of the stalk. L10 forms an elongated spine to which L12 dimers bind in a sequential fashion forming a multimeric L10(L12)X complex. Post-translationally, one or more lysine residues are methylated.

Functionally, forms part of the ribosomal stalk which helps the ribosome interact with GTP-bound translation factors. The sequence is that of Large ribosomal subunit protein uL11 from Staphylococcus saprophyticus subsp. saprophyticus (strain ATCC 15305 / DSM 20229 / NCIMB 8711 / NCTC 7292 / S-41).